Reading from the N-terminus, the 379-residue chain is Dual-specificity RNA methyltransferase RlmN (379 aa).

Residue Glu-90 is the Proton acceptor of the active site. Residues Glu-96–Asp-348 enclose the Radical SAM core domain. A disulfide bridge connects residues Cys-103 and Cys-353. Residues Cys-110, Cys-114, and Cys-117 each coordinate [4Fe-4S] cluster. S-adenosyl-L-methionine contacts are provided by residues Gly-179–Glu-180, Ser-211, Ser-233–His-235, and Asn-310. Catalysis depends on Cys-353, which acts as the S-methylcysteine intermediate.

The protein belongs to the radical SAM superfamily. RlmN family. [4Fe-4S] cluster is required as a cofactor.

The protein localises to the cytoplasm. The catalysed reaction is adenosine(2503) in 23S rRNA + 2 reduced [2Fe-2S]-[ferredoxin] + 2 S-adenosyl-L-methionine = 2-methyladenosine(2503) in 23S rRNA + 5'-deoxyadenosine + L-methionine + 2 oxidized [2Fe-2S]-[ferredoxin] + S-adenosyl-L-homocysteine. It carries out the reaction adenosine(37) in tRNA + 2 reduced [2Fe-2S]-[ferredoxin] + 2 S-adenosyl-L-methionine = 2-methyladenosine(37) in tRNA + 5'-deoxyadenosine + L-methionine + 2 oxidized [2Fe-2S]-[ferredoxin] + S-adenosyl-L-homocysteine. Specifically methylates position 2 of adenine 2503 in 23S rRNA and position 2 of adenine 37 in tRNAs. m2A2503 modification seems to play a crucial role in the proofreading step occurring at the peptidyl transferase center and thus would serve to optimize ribosomal fidelity. The sequence is that of Dual-specificity RNA methyltransferase RlmN from Nitrosomonas eutropha (strain DSM 101675 / C91 / Nm57).